We begin with the raw amino-acid sequence, 168 residues long: Nicotinamide-nucleotide adenylyltransferase (168 aa).

This sequence belongs to the archaeal NMN adenylyltransferase family.

The protein localises to the cytoplasm. The enzyme catalyses beta-nicotinamide D-ribonucleotide + ATP + H(+) = diphosphate + NAD(+). Its pathway is cofactor biosynthesis; NAD(+) biosynthesis; NAD(+) from nicotinamide D-ribonucleotide: step 1/1. The sequence is that of Nicotinamide-nucleotide adenylyltransferase from Methanoculleus marisnigri (strain ATCC 35101 / DSM 1498 / JR1).